We begin with the raw amino-acid sequence, 376 residues long: Formate dehydrogenase 2 (376 aa).

2 residues coordinate substrate: Val-97 and Asn-121. NAD(+)-binding positions include 176–177 (RI), Asp-197, 244–248 (PLHKD), Thr-270, Asp-296, and 325–328 (HISG).

The protein belongs to the D-isomer specific 2-hydroxyacid dehydrogenase family. FDH subfamily. Homodimer.

Its subcellular location is the cytoplasm. The enzyme catalyses formate + NAD(+) = CO2 + NADH. In terms of biological role, catalyzes the NAD(+)-dependent oxidation of formate to carbon dioxide. Formate oxidation is the final step in the methanol oxidation pathway in methylotrophic microorganisms. Has a role in the detoxification of exogenous formate in non-methylotrophic organisms. In Saccharomyces cerevisiae (strain CEN.PK113-7D) (Baker's yeast), this protein is Formate dehydrogenase 2 (FDH2).